The chain runs to 82 residues: Immediate early response 3-interacting protein 1 (82 aa).

2 consecutive transmembrane segments (helical) span residues 2 to 22 (AFTL…IAVL) and 62 to 82 (VMRV…LLFG).

Belongs to the YOS1 family.

Its subcellular location is the endoplasmic reticulum membrane. In terms of biological role, regulator of endoplasmic reticulum secretion that acts as a key determinant of brain size. Required for secretion of extracellular matrix proteins. Required for correct brain development by depositing sufficient extracellular matrix proteins for tissue integrity and the proliferation of neural progenitors. Acts as a regulator of the unfolded protein response (UPR). The polypeptide is Immediate early response 3-interacting protein 1 (Danio rerio (Zebrafish)).